The chain runs to 321 residues: Methionyl-tRNA formyltransferase (321 aa).

G111–P114 serves as a coordination point for (6S)-5,6,7,8-tetrahydrofolate.

It belongs to the Fmt family.

The catalysed reaction is L-methionyl-tRNA(fMet) + (6R)-10-formyltetrahydrofolate = N-formyl-L-methionyl-tRNA(fMet) + (6S)-5,6,7,8-tetrahydrofolate + H(+). In terms of biological role, attaches a formyl group to the free amino group of methionyl-tRNA(fMet). The formyl group appears to play a dual role in the initiator identity of N-formylmethionyl-tRNA by promoting its recognition by IF2 and preventing the misappropriation of this tRNA by the elongation apparatus. The polypeptide is Methionyl-tRNA formyltransferase (Chlamydia pneumoniae (Chlamydophila pneumoniae)).